The sequence spans 469 residues: Putative diacyglycerol O-acyltransferase MT0231 (469 aa).

His-139 functions as the Proton acceptor in the catalytic mechanism.

The protein belongs to the long-chain O-acyltransferase family.

The catalysed reaction is an acyl-CoA + a 1,2-diacyl-sn-glycerol = a triacyl-sn-glycerol + CoA. Its pathway is glycerolipid metabolism; triacylglycerol biosynthesis. This Mycobacterium tuberculosis (strain CDC 1551 / Oshkosh) protein is Putative diacyglycerol O-acyltransferase MT0231.